The primary structure comprises 313 residues: Porphobilinogen deaminase (313 aa).

An S-(dipyrrolylmethanemethyl)cysteine modification is found at Cys242.

The protein belongs to the HMBS family. As to quaternary structure, monomer. It depends on dipyrromethane as a cofactor.

It carries out the reaction 4 porphobilinogen + H2O = hydroxymethylbilane + 4 NH4(+). Its pathway is porphyrin-containing compound metabolism; protoporphyrin-IX biosynthesis; coproporphyrinogen-III from 5-aminolevulinate: step 2/4. Its function is as follows. Tetrapolymerization of the monopyrrole PBG into the hydroxymethylbilane pre-uroporphyrinogen in several discrete steps. The sequence is that of Porphobilinogen deaminase from Escherichia coli (strain SE11).